The chain runs to 303 residues: Vesicle-trafficking protein SEC22c (303 aa).

The Cytoplasmic segment spans residues 1–183; that stretch reads MSVIFFACVV…EPAPNFRMEP (183 aa). The Longin domain occupies 8 to 119; the sequence is CVVRVRDGLP…YAFLEFDSII (112 aa). The helical transmembrane segment at 184–204 threads the bilayer; it reads VTALGILSLILNIMCAALNLI. The Lumenal portion of the chain corresponds to 205–223; that stretch reads RGVHLAEHSLQVAHEEIGN. Residues 224–244 traverse the membrane as a helical segment; sequence ILAFLVPFVACIFQCYLYLFY. The Cytoplasmic portion of the chain corresponds to 245-248; the sequence is SPAR. Residues 249–269 form a helical membrane-spanning segment; the sequence is TMKVVLMLLFICLGNMYLHGL. A topological domain (lumenal) is located at residue R270. A helical membrane pass occupies residues 271 to 291; it reads NLWQILFHIGVAFLSSYQILT. The Cytoplasmic portion of the chain corresponds to 292-303; sequence RQLQEKQSDCGV.

The protein belongs to the synaptobrevin family. As to expression, ubiquitously expressed.

The protein resides in the endoplasmic reticulum membrane. Functionally, may be involved in vesicle transport between the ER and the Golgi complex. This Homo sapiens (Human) protein is Vesicle-trafficking protein SEC22c (SEC22C).